Here is a 557-residue protein sequence, read N- to C-terminus: Potassium-transporting ATPase potassium-binding subunit (557 aa).

A run of 12 helical transmembrane segments spans residues 5 to 25 (GFLL…PLGS), 63 to 83 (LSAI…MLLG), 132 to 152 (GLTV…FAFI), 170 to 190 (LLRI…LFFI), 253 to 273 (FVQM…FGEV), 283 to 303 (LLWA…WAEV), 329 to 349 (VLVS…AVIA), 356 to 376 (ALGG…FGGV), 379 to 399 (GLYG…LMIG), 416 to 436 (LTAL…ALAM), 484 to 504 (LLAF…MAIA), and 526 to 546 (LFVG…FIPA).

It belongs to the KdpA family. The system is composed of three essential subunits: KdpA, KdpB and KdpC.

The protein localises to the cell inner membrane. In terms of biological role, part of the high-affinity ATP-driven potassium transport (or Kdp) system, which catalyzes the hydrolysis of ATP coupled with the electrogenic transport of potassium into the cytoplasm. This subunit binds the periplasmic potassium ions and delivers the ions to the membrane domain of KdpB through an intramembrane tunnel. The protein is Potassium-transporting ATPase potassium-binding subunit of Escherichia coli (strain SMS-3-5 / SECEC).